Here is a 256-residue protein sequence, read N- to C-terminus: Acetyl-coenzyme A carboxylase carboxyl transferase subunit alpha (256 aa).

The region spanning 1 to 236 (MTDVARILKE…KSHLIDEITQ (236 aa)) is the CoA carboxyltransferase C-terminal domain.

Belongs to the AccA family. In terms of assembly, acetyl-CoA carboxylase is a heterohexamer composed of biotin carboxyl carrier protein (AccB), biotin carboxylase (AccC) and two subunits each of ACCase subunit alpha (AccA) and ACCase subunit beta (AccD).

It localises to the cytoplasm. It carries out the reaction N(6)-carboxybiotinyl-L-lysyl-[protein] + acetyl-CoA = N(6)-biotinyl-L-lysyl-[protein] + malonyl-CoA. It functions in the pathway lipid metabolism; malonyl-CoA biosynthesis; malonyl-CoA from acetyl-CoA: step 1/1. Its function is as follows. Component of the acetyl coenzyme A carboxylase (ACC) complex. First, biotin carboxylase catalyzes the carboxylation of biotin on its carrier protein (BCCP) and then the CO(2) group is transferred by the carboxyltransferase to acetyl-CoA to form malonyl-CoA. The sequence is that of Acetyl-coenzyme A carboxylase carboxyl transferase subunit alpha from Streptococcus equi subsp. equi (strain 4047).